The sequence spans 451 residues: Speckle-type POZ protein homolog (451 aa).

The interval 51-75 is disordered; it reads EVVSSGSGNSAHGRSISPSPSSASH. Residues 60–75 are compositionally biased toward low complexity; the sequence is SAHGRSISPSPSSASH. The MATH domain maps to 95 to 225; the sequence is KFNYMWTINN…GDRLSIFCEV (131 aa). In terms of domain architecture, BTB spans 265-338; sequence SDFTLVCKSD…MYTGQTKYIE (74 aa).

It belongs to the Tdpoz family.

The protein localises to the nucleus. Its subcellular location is the nucleus speckle. It functions in the pathway protein modification; protein ubiquitination. Its function is as follows. Mediates ubiquitination and proteasomal degradation of target proteins, most likely in complex with cul-3. May promote the degradation of bromodomain-containing proteins such as bet-1. The sequence is that of Speckle-type POZ protein homolog from Caenorhabditis elegans.